A 384-amino-acid polypeptide reads, in one-letter code: Putative aminohydrolase MTH_994 (384 aa).

Zn(2+)-binding residues include His-60, His-62, His-207, and Asp-291.

This sequence belongs to the metallo-dependent hydrolases superfamily. ATZ/TRZ family.

This chain is Putative aminohydrolase MTH_994, found in Methanothermobacter thermautotrophicus (strain ATCC 29096 / DSM 1053 / JCM 10044 / NBRC 100330 / Delta H) (Methanobacterium thermoautotrophicum).